A 35-amino-acid chain; its full sequence is Pheromone-binding protein (35 aa).

It belongs to the PBP/GOBP family. As to expression, antenna.

In terms of biological role, this major soluble protein in olfactory sensilla of male moths might serve to solubilize the extremely hydrophobic pheromone molecules and to transport pheromone through the aqueous lymph to receptors located on olfactory cilia. The polypeptide is Pheromone-binding protein (Hyalophora cecropia (Cecropia moth)).